The chain runs to 305 residues: tRNA dimethylallyltransferase 2 (305 aa).

14-21 (GPTASGKT) lines the ATP pocket. 16–21 (TASGKT) contacts substrate. The tract at residues 39 to 42 (DSRQ) is interaction with substrate tRNA.

This sequence belongs to the IPP transferase family. Monomer. It depends on Mg(2+) as a cofactor.

It carries out the reaction adenosine(37) in tRNA + dimethylallyl diphosphate = N(6)-dimethylallyladenosine(37) in tRNA + diphosphate. Its function is as follows. Catalyzes the transfer of a dimethylallyl group onto the adenine at position 37 in tRNAs that read codons beginning with uridine, leading to the formation of N6-(dimethylallyl)adenosine (i(6)A). The chain is tRNA dimethylallyltransferase 2 from Trichlorobacter lovleyi (strain ATCC BAA-1151 / DSM 17278 / SZ) (Geobacter lovleyi).